The following is a 222-amino-acid chain: Putative O-methyltransferase MAV_1364 (222 aa).

S-adenosyl-L-methionine is bound by residues Val-49, Glu-71, 73 to 74, Ser-79, Asp-97, and Ile-98; that span reads GT. Asp-145 is a substrate binding site. S-adenosyl-L-methionine is bound at residue Asp-147.

It belongs to the class I-like SAM-binding methyltransferase superfamily. Cation-dependent O-methyltransferase family.

The sequence is that of Putative O-methyltransferase MAV_1364 from Mycobacterium avium (strain 104).